A 439-amino-acid chain; its full sequence is Histidine--tRNA ligase (439 aa).

This sequence belongs to the class-II aminoacyl-tRNA synthetase family. Homodimer.

The protein localises to the cytoplasm. It catalyses the reaction tRNA(His) + L-histidine + ATP = L-histidyl-tRNA(His) + AMP + diphosphate + H(+). The chain is Histidine--tRNA ligase from Leptospira interrogans serogroup Icterohaemorrhagiae serovar copenhageni (strain Fiocruz L1-130).